The sequence spans 630 residues: Adagio-like protein 1 (630 aa).

The tract at residues 1 to 36 (MEWDSESDGAGSIGAGEEEEEEEEEEEGGFGGGGGG) is disordered. A compositionally biased stretch (acidic residues) spans 16-28 (GEEEEEEEEEEEG). The 80-residue stretch at 48-127 (IEGMLRASGP…SEIRKCIDNG (80 aa)) folds into the PAS domain. Residue Cys-95 is modified to S-4a-FMN cysteine. The F-box domain maps to 216–262 (SSLFQLTDEVLCQSILSRLSPRDIASVSSVCRRLYLLTRNEDLWRMV). Kelch repeat units follow at residues 378 to 428 (LLVV…TLDG), 430 to 481 (KLVV…VYGG), 483 to 535 (KILM…AGPP), and 549 to 601 (RVLI…VVGG).

The protein belongs to the ADAGIO family. In terms of processing, FMN binds covalently to cysteine after exposure to blue light and is reversed in the dark.

The protein localises to the nucleus. The protein operates within protein modification; protein ubiquitination. In terms of biological role, component of an E3 ubiquitin ligase complex that plays a central role in blue light-dependent circadian cycles. Acts as a blue light photoreceptor, due to the presence of FMN, that mediates light-regulated protein degradation of critical clock components by targeting them to the proteasome complex. The chain is Adagio-like protein 1 from Oryza sativa subsp. japonica (Rice).